Reading from the N-terminus, the 241-residue chain is Triosephosphate isomerase (241 aa).

8-10 (NWK) is a binding site for substrate. H93 acts as the Electrophile in catalysis. The active-site Proton acceptor is E163. Residues G169, S205, and 226 to 227 (GG) contribute to the substrate site.

Belongs to the triosephosphate isomerase family. Homodimer.

Its subcellular location is the cytoplasm. It catalyses the reaction D-glyceraldehyde 3-phosphate = dihydroxyacetone phosphate. The protein operates within carbohydrate biosynthesis; gluconeogenesis. It participates in carbohydrate degradation; glycolysis; D-glyceraldehyde 3-phosphate from glycerone phosphate: step 1/1. Involved in the gluconeogenesis. Catalyzes stereospecifically the conversion of dihydroxyacetone phosphate (DHAP) to D-glyceraldehyde-3-phosphate (G3P). This chain is Triosephosphate isomerase, found in Bdellovibrio bacteriovorus (strain ATCC 15356 / DSM 50701 / NCIMB 9529 / HD100).